The sequence spans 271 residues: 2-aminophenol 1,6-dioxygenase subunit alpha (271 aa).

The protein belongs to the LigB/MhpB extradiol dioxygenase family. As to quaternary structure, the APD complex is a heterotetramer of 2 alpha (CnbCa) and 2 beta (CnbCb) subunits.

It functions in the pathway xenobiotic degradation; nitrobenzene degradation. Its pathway is xenobiotic degradation; 4-chloronitrobenzene degradation. Its function is as follows. Component of the 2-aminophenol 1,6-dioxygenase (APD) complex that catalyzes the ring fission of 2-aminophenol to produce 2-aminomuconic semialdehyde. CnbCa may have a role in the stability of the complex. The complex is also active on other substrates such as 2-amino-5-chlorophenol (68% activity), protocatechuate (33% activity) and catechol (5% activity). Both 2-aminophenol and 2-amino-5-cholorophenol are likely native substrates for this dioxygenase which is involved in the reductive degradation pathway of both nitrobenzene (NB) and 4-chloronitrobenzene (4-CNB), allowing C.testosteroni strain CNB-1 to grow on these compounds as sole source of carbon, nitrogen, and energy. The sequence is that of 2-aminophenol 1,6-dioxygenase subunit alpha from Comamonas testosteroni (Pseudomonas testosteroni).